Consider the following 296-residue polypeptide: ATP-dependent ribose-1-phosphate kinase (296 aa).

Catalysis depends on Asp-242, which acts as the Proton acceptor.

It belongs to the carbohydrate kinase PfkB family. Requires Mg(2+) as cofactor.

The catalysed reaction is alpha-D-ribose 1-phosphate + ATP = alpha-D-ribose 1,5-bisphosphate + ADP + H(+). Its activity is regulated as follows. Requires salt for kinase activity. 2.0 M is the optimal KCl concentration. Its function is as follows. Kinase involved in the non-carboxylating pentose bisphosphate pathway, a nucleoside degradation pathway present in some halophilic archaea. Catalyzes the ATP-dependent phosphorylation of ribose 1-phosphate (R1P) to ribose 1,5-bisphosphate (R15P). Shows weak activity towards various other phosphate acceptors, such as xylulose, 2'-deoxyguanosine and D-ribulose. ATP is the most preferred phosphate donor, followed by CTP and GTP. The protein is ATP-dependent ribose-1-phosphate kinase of Halopiger xanaduensis (strain DSM 18323 / JCM 14033 / SH-6).